A 946-amino-acid chain; its full sequence is Bifunctional glutamine synthetase adenylyltransferase/adenylyl-removing enzyme (946 aa).

Residues Met1–Glu440 form an adenylyl removase region. The segment at Ser449–Glu946 is adenylyl transferase.

It belongs to the GlnE family. Requires Mg(2+) as cofactor.

It carries out the reaction [glutamine synthetase]-O(4)-(5'-adenylyl)-L-tyrosine + phosphate = [glutamine synthetase]-L-tyrosine + ADP. The enzyme catalyses [glutamine synthetase]-L-tyrosine + ATP = [glutamine synthetase]-O(4)-(5'-adenylyl)-L-tyrosine + diphosphate. Its function is as follows. Involved in the regulation of glutamine synthetase GlnA, a key enzyme in the process to assimilate ammonia. When cellular nitrogen levels are high, the C-terminal adenylyl transferase (AT) inactivates GlnA by covalent transfer of an adenylyl group from ATP to specific tyrosine residue of GlnA, thus reducing its activity. Conversely, when nitrogen levels are low, the N-terminal adenylyl removase (AR) activates GlnA by removing the adenylyl group by phosphorolysis, increasing its activity. The regulatory region of GlnE binds the signal transduction protein PII (GlnB) which indicates the nitrogen status of the cell. The polypeptide is Bifunctional glutamine synthetase adenylyltransferase/adenylyl-removing enzyme (Escherichia coli O8 (strain IAI1)).